Here is a 128-residue protein sequence, read N- to C-terminus: uncharacterized protein (128 aa).

It localises to the mitochondrion. This is an uncharacterized protein from Saccharomyces cerevisiae (strain ATCC 204508 / S288c) (Baker's yeast).